The chain runs to 313 residues: Homoserine O-succinyltransferase (313 aa).

The Acyl-thioester intermediate role is filled by cysteine 142. Residues lysine 163 and serine 192 each contribute to the substrate site. Histidine 235 functions as the Proton acceptor in the catalytic mechanism. Glutamate 237 is an active-site residue. Arginine 249 contacts substrate.

The protein belongs to the MetA family.

Its subcellular location is the cytoplasm. The enzyme catalyses L-homoserine + succinyl-CoA = O-succinyl-L-homoserine + CoA. The protein operates within amino-acid biosynthesis; L-methionine biosynthesis via de novo pathway; O-succinyl-L-homoserine from L-homoserine: step 1/1. In terms of biological role, transfers a succinyl group from succinyl-CoA to L-homoserine, forming succinyl-L-homoserine. The polypeptide is Homoserine O-succinyltransferase (Aliivibrio fischeri (strain MJ11) (Vibrio fischeri)).